Consider the following 227-residue polypeptide: Cytochrome c oxidase subunit 2 (227 aa).

Topologically, residues 1-14 are mitochondrial intermembrane; it reads MAYPLQLGFQDATS. A helical transmembrane segment spans residues 15–45; sequence PVMEELLHFHDHTLMIIFLISSLVLYIIMLM. At 46–59 the chain is on the mitochondrial matrix side; the sequence is LTTKLIHTNMMNVQ. Residues 60–87 traverse the membrane as a helical segment; it reads EMEMIWTILPAIILILIALPSLHTLYMM. Residues 88 to 227 lie on the Mitochondrial intermembrane side of the membrane; it reads DEINNPLLTI…YFESWSASLA (140 aa). Residues His161, Cys196, Glu198, Cys200, His204, and Met207 each contribute to the Cu cation site. Glu198 is a Mg(2+) binding site. The residue at position 218 (Tyr218) is a Phosphotyrosine.

It belongs to the cytochrome c oxidase subunit 2 family. Component of the cytochrome c oxidase (complex IV, CIV), a multisubunit enzyme composed of 14 subunits. The complex is composed of a catalytic core of 3 subunits MT-CO1, MT-CO2 and MT-CO3, encoded in the mitochondrial DNA, and 11 supernumerary subunits COX4I, COX5A, COX5B, COX6A, COX6B, COX6C, COX7A, COX7B, COX7C, COX8 and NDUFA4, which are encoded in the nuclear genome. The complex exists as a monomer or a dimer and forms supercomplexes (SCs) in the inner mitochondrial membrane with NADH-ubiquinone oxidoreductase (complex I, CI) and ubiquinol-cytochrome c oxidoreductase (cytochrome b-c1 complex, complex III, CIII), resulting in different assemblies (supercomplex SCI(1)III(2)IV(1) and megacomplex MCI(2)III(2)IV(2)). Found in a complex with TMEM177, COA6, COX18, COX20, SCO1 and SCO2. Interacts with TMEM177 in a COX20-dependent manner. Interacts with COX20. Interacts with COX16. Cu cation serves as cofactor.

The protein resides in the mitochondrion inner membrane. The catalysed reaction is 4 Fe(II)-[cytochrome c] + O2 + 8 H(+)(in) = 4 Fe(III)-[cytochrome c] + 2 H2O + 4 H(+)(out). Component of the cytochrome c oxidase, the last enzyme in the mitochondrial electron transport chain which drives oxidative phosphorylation. The respiratory chain contains 3 multisubunit complexes succinate dehydrogenase (complex II, CII), ubiquinol-cytochrome c oxidoreductase (cytochrome b-c1 complex, complex III, CIII) and cytochrome c oxidase (complex IV, CIV), that cooperate to transfer electrons derived from NADH and succinate to molecular oxygen, creating an electrochemical gradient over the inner membrane that drives transmembrane transport and the ATP synthase. Cytochrome c oxidase is the component of the respiratory chain that catalyzes the reduction of oxygen to water. Electrons originating from reduced cytochrome c in the intermembrane space (IMS) are transferred via the dinuclear copper A center (CU(A)) of subunit 2 and heme A of subunit 1 to the active site in subunit 1, a binuclear center (BNC) formed by heme A3 and copper B (CU(B)). The BNC reduces molecular oxygen to 2 water molecules using 4 electrons from cytochrome c in the IMS and 4 protons from the mitochondrial matrix. This Elephas maximus (Indian elephant) protein is Cytochrome c oxidase subunit 2 (MT-CO2).